The chain runs to 625 residues: tRNA-guanine(15) transglycosylase (625 aa).

Asp-86 (nucleophile) is an active-site residue. The substrate site is built by Asp-121 and Gly-184. Positions 546–621 constitute a PUA domain; sequence GLRVVVDDES…VAVKVHEGVN (76 aa).

This sequence belongs to the archaeosine tRNA-ribosyltransferase family. Requires Zn(2+) as cofactor.

It carries out the reaction guanosine(15) in tRNA + 7-cyano-7-deazaguanine = 7-cyano-7-carbaguanosine(15) in tRNA + guanine. It participates in tRNA modification; archaeosine-tRNA biosynthesis. Its function is as follows. Exchanges the guanine residue with 7-cyano-7-deazaguanine (preQ0) at position 15 in the dihydrouridine loop (D-loop) of archaeal tRNAs. This is tRNA-guanine(15) transglycosylase from Picrophilus torridus (strain ATCC 700027 / DSM 9790 / JCM 10055 / NBRC 100828 / KAW 2/3).